A 489-amino-acid chain; its full sequence is MLSFATLRGRISTVDAAKAAPPPSPLAPIDLTDHSQVAGVMNLAARIGDILLSSGTSNSDTKVQVRAVTSAYGLYYTHVDITLNTITIFTNIGVERKMPVNVFHVVGKLDTNFSKLSEVDRLIRSIQAGATPPEVAEKILDELEQSPASYGFPVALLGWAMMGGAVAVLLGGGWQVSLIAFITAFTIIATTSFLGKKGLPTFFQNVVGGFIATLPASIAYSLALQFGLEIKPSQIIASGIVVLLAGLTLVQSLQDGITGAPVTASARFFETLLFTGGIVAGVGLGIQLSEILHVMLPAMESAAAPNYSSTFARIIAGGVTAAAFAVGCYAEWSSVIIAGLTALMGSAFYYLFVVYLGPVSAAAIAATAVGFTGGLLARRFLIPPLIVAIAGITPMLPGLAIYRGMYATLNDQTLMGFTNIAVALATASSLAAGVVLGEWIARRLRRPPRFNPYRAFTKANEFSFQEEAEQNQRRQRKRPKTNQRFGNKR.

10 helical membrane-spanning segments follow: residues 151 to 171, 174 to 194, 206 to 226, 233 to 253, 268 to 288, 314 to 334, 335 to 355, 356 to 376, 381 to 401, and 420 to 440; these read GFPVALLGWAMMGGAVAVLLG, WQVSLIAFITAFTIIATTSFL, VVGGFIATLPASIAYSLALQF, SQIIASGIVVLLAGLTLVQSL, FFETLLFTGGIVAGVGLGIQL, IIAGGVTAAAFAVGCYAEWSS, VIIAGLTALMGSAFYYLFVVY, LGPVSAAAIAATAVGFTGGLL, LIPPLIVAIAGITPMLPGLAI, and IAVALATASSLAAGVVLGEWI. The interval 464-489 is disordered; it reads FQEEAEQNQRRQRKRPKTNQRFGNKR. The span at 473 to 489 shows a compositional bias: basic residues; that stretch reads RRQRKRPKTNQRFGNKR.

The protein belongs to the ThrE exporter (TC 2.A.79) family.

Its subcellular location is the cell membrane. The enzyme catalyses L-threonine(in) + H(+)(out) = L-threonine(out) + H(+)(in). Transport is inhibited by the proton ionophore carbonyl cyanide m-chlorophenylhydrazone (CCCP). Functionally, catalyzes the export of L-threonine and L-serine from the cell to the extracellular environment. Export is dependent on the proton motive force. This chain is Threonine/serine exporter, found in Corynebacterium glutamicum (Brevibacterium saccharolyticum).